The following is a 397-amino-acid chain: Urea transporter 2 (397 aa).

The next 5 helical transmembrane spans lie at 68 to 85, 92 to 109, 115 to 135, 143 to 163, and 172 to 192; these read VMFV…IGLF, AIAG…ALIL, AIAS…IAVF, WWLL…SSAL, and LPVF…ATGH. N-linked (GlcNAc...) asparagine glycosylation is present at N210. 5 helical membrane-spanning segments follow: residues 239–257, 264–280, 287–303, 309–329, and 331–351; these read WTGG…LICL, TMGM…FDSI, FNST…FYVI, LLAV…TNVL, and VFGL…FLLL.

The protein belongs to the urea transporter family. Kidney.

The protein localises to the apical cell membrane. It localises to the basolateral cell membrane. The catalysed reaction is urea(in) = urea(out). With respect to regulation, inhibited by urea analogs and phloretin. Its function is as follows. Mediates the transport of urea driven by a concentration gradient across the cell membrane of the renal inner medullary collecting duct which is critical to the urinary concentrating mechanism. This Oryctolagus cuniculus (Rabbit) protein is Urea transporter 2 (SLC14A2).